A 447-amino-acid polypeptide reads, in one-letter code: Na(+)-translocating NADH-quinone reductase subunit A (447 aa).

Belongs to the NqrA family. Composed of six subunits; NqrA, NqrB, NqrC, NqrD, NqrE and NqrF.

It catalyses the reaction a ubiquinone + n Na(+)(in) + NADH + H(+) = a ubiquinol + n Na(+)(out) + NAD(+). NQR complex catalyzes the reduction of ubiquinone-1 to ubiquinol by two successive reactions, coupled with the transport of Na(+) ions from the cytoplasm to the periplasm. NqrA to NqrE are probably involved in the second step, the conversion of ubisemiquinone to ubiquinol. This Neisseria gonorrhoeae (strain NCCP11945) protein is Na(+)-translocating NADH-quinone reductase subunit A.